Here is a 964-residue protein sequence, read N- to C-terminus: Glycine dehydrogenase (decarboxylating) (964 aa).

Lysine 710 bears the N6-(pyridoxal phosphate)lysine mark.

It belongs to the GcvP family. As to quaternary structure, the glycine cleavage system is composed of four proteins: P, T, L and H. Pyridoxal 5'-phosphate is required as a cofactor.

The catalysed reaction is N(6)-[(R)-lipoyl]-L-lysyl-[glycine-cleavage complex H protein] + glycine + H(+) = N(6)-[(R)-S(8)-aminomethyldihydrolipoyl]-L-lysyl-[glycine-cleavage complex H protein] + CO2. In terms of biological role, the glycine cleavage system catalyzes the degradation of glycine. The P protein binds the alpha-amino group of glycine through its pyridoxal phosphate cofactor; CO(2) is released and the remaining methylamine moiety is then transferred to the lipoamide cofactor of the H protein. This Saccharophagus degradans (strain 2-40 / ATCC 43961 / DSM 17024) protein is Glycine dehydrogenase (decarboxylating).